The primary structure comprises 294 residues: Elongation factor Ts (294 aa).

The tract at residues 80–83 (TDFV) is involved in Mg(2+) ion dislocation from EF-Tu.

The protein belongs to the EF-Ts family.

The protein localises to the cytoplasm. In terms of biological role, associates with the EF-Tu.GDP complex and induces the exchange of GDP to GTP. It remains bound to the aminoacyl-tRNA.EF-Tu.GTP complex up to the GTP hydrolysis stage on the ribosome. This is Elongation factor Ts from Polynucleobacter asymbioticus (strain DSM 18221 / CIP 109841 / QLW-P1DMWA-1) (Polynucleobacter necessarius subsp. asymbioticus).